The chain runs to 201 residues: 3-isopropylmalate dehydratase small subunit (201 aa).

The protein belongs to the LeuD family. LeuD type 1 subfamily. Heterodimer of LeuC and LeuD.

The enzyme catalyses (2R,3S)-3-isopropylmalate = (2S)-2-isopropylmalate. The protein operates within amino-acid biosynthesis; L-leucine biosynthesis; L-leucine from 3-methyl-2-oxobutanoate: step 2/4. Functionally, catalyzes the isomerization between 2-isopropylmalate and 3-isopropylmalate, via the formation of 2-isopropylmaleate. The polypeptide is 3-isopropylmalate dehydratase small subunit (Pasteurella multocida (strain Pm70)).